We begin with the raw amino-acid sequence, 104 residues long: Large ribosomal subunit protein uL23 (104 aa).

The protein belongs to the universal ribosomal protein uL23 family. As to quaternary structure, part of the 50S ribosomal subunit. Contacts protein L29, and trigger factor when it is bound to the ribosome.

Its function is as follows. One of the early assembly proteins it binds 23S rRNA. One of the proteins that surrounds the polypeptide exit tunnel on the outside of the ribosome. Forms the main docking site for trigger factor binding to the ribosome. The protein is Large ribosomal subunit protein uL23 of Nostoc sp. (strain PCC 7120 / SAG 25.82 / UTEX 2576).